We begin with the raw amino-acid sequence, 161 residues long: UPF0262 protein Rru_A2770 (161 aa).

Belongs to the UPF0262 family.

The sequence is that of UPF0262 protein Rru_A2770 from Rhodospirillum rubrum (strain ATCC 11170 / ATH 1.1.1 / DSM 467 / LMG 4362 / NCIMB 8255 / S1).